The sequence spans 531 residues: Histone-arginine methyltransferase CARMER (531 aa).

The region spanning 141-450 (ASQYFQFYGY…QSYDVTIDLH (310 aa)) is the SAM-dependent MTase PRMT-type domain. S-adenosyl-L-methionine contacts are provided by Gln-154, Arg-163, Gly-187, Glu-209, Glu-238, and Thr-266. Arg-501 carries the asymmetric dimethylarginine; by autocatalysis modification.

The protein belongs to the class I-like SAM-binding methyltransferase superfamily. Protein arginine N-methyltransferase family. Homodimer. In terms of processing, the dimethylated protein is the major form.

The protein localises to the cytoplasm. The protein resides in the nucleus. The catalysed reaction is L-arginyl-[protein] + 2 S-adenosyl-L-methionine = N(omega),N(omega)-dimethyl-L-arginyl-[protein] + 2 S-adenosyl-L-homocysteine + 2 H(+). In terms of biological role, methylates (mono- and asymmetric dimethylation) the guanidino nitrogens of arginyl residues in proteins. May methylate histone H3 at 'Arg-17' and activate transcription via chromatin remodeling. The sequence is that of Histone-arginine methyltransferase CARMER (Art4) from Drosophila ananassae (Fruit fly).